The following is a 381-amino-acid chain: Homoserine O-succinyltransferase (381 aa).

The 316-residue stretch at 45–360 folds into the AB hydrolase-1 domain; sequence NAVLVCHALN…PHGHDAFLLD (316 aa). S151 serves as the catalytic Nucleophile. R221 contributes to the substrate binding site. Residues D321 and H354 contribute to the active site. Substrate is bound at residue D355.

This sequence belongs to the AB hydrolase superfamily. MetX family. As to quaternary structure, homodimer.

It localises to the cytoplasm. It carries out the reaction L-homoserine + succinyl-CoA = O-succinyl-L-homoserine + CoA. It functions in the pathway amino-acid biosynthesis; L-methionine biosynthesis via de novo pathway; O-succinyl-L-homoserine from L-homoserine: step 1/1. Transfers a succinyl group from succinyl-CoA to L-homoserine, forming succinyl-L-homoserine. This chain is Homoserine O-succinyltransferase, found in Burkholderia cenocepacia (strain ATCC BAA-245 / DSM 16553 / LMG 16656 / NCTC 13227 / J2315 / CF5610) (Burkholderia cepacia (strain J2315)).